Consider the following 140-residue polypeptide: Ribosomal RNA large subunit methyltransferase H (140 aa).

S-adenosyl-L-methionine-binding residues include leucine 55 and glycine 87.

Belongs to the RNA methyltransferase RlmH family. As to quaternary structure, homodimer.

It is found in the cytoplasm. It catalyses the reaction pseudouridine(1915) in 23S rRNA + S-adenosyl-L-methionine = N(3)-methylpseudouridine(1915) in 23S rRNA + S-adenosyl-L-homocysteine + H(+). Specifically methylates the pseudouridine at position 1915 (m3Psi1915) in 23S rRNA. The polypeptide is Ribosomal RNA large subunit methyltransferase H (Erythrobacter litoralis (strain HTCC2594)).